Reading from the N-terminus, the 349-residue chain is Homeobox-leucine zipper protein HOX7 (349 aa).

Residues 42-186 are disordered; the sequence is RATRRDEQDD…PKQKSDLANR (145 aa). Composition is skewed to polar residues over residues 89–99 and 121–135; these read SAETGSANSEM and SSPS…RQQV. The segment at residues 150 to 209 is a DNA-binding region (homeobox); the sequence is GARKKLRLSKEQSSFLEDSFKEHSTLTPKQKSDLANRLNLRPRQVEVWFQNRRARTKLKQ. A compositionally biased stretch (basic and acidic residues) spans 167–183; that stretch reads DSFKEHSTLTPKQKSDL. Residues 208–252 form a leucine-zipper region; it reads KQTEVDCEHLKRCCERLTRENRRLQREVAELRGALRTTTSSYPPL.

This sequence belongs to the HD-ZIP homeobox family. Class II subfamily. As to quaternary structure, homodimer. May form a heterodimer with HOX1, HOX2 or HOX3. As to expression, expressed in seedlings, roots, leaves, nodes, internodes, flowers and embryo.

The protein resides in the nucleus. In terms of biological role, probable transcription factor that binds to the DNA sequence 5'-CAAT[GC]ATTG-3'. The chain is Homeobox-leucine zipper protein HOX7 (HOX7) from Oryza sativa subsp. indica (Rice).